The primary structure comprises 267 residues: Large ribosomal subunit protein uL2c (267 aa).

It belongs to the universal ribosomal protein uL2 family. In terms of assembly, part of the 50S ribosomal subunit.

It localises to the plastid. The protein localises to the apicoplast. This chain is Large ribosomal subunit protein uL2c (rpl2), found in Toxoplasma gondii.